We begin with the raw amino-acid sequence, 86 residues long: Toxin Td2 (86 aa).

The N-terminal stretch at 1-20 (MTRFVLFLNCFFLICMVVEC) is a signal peptide. The region spanning 21 to 83 (KEGYLMGADG…TWDRATNTCG (63 aa)) is the LCN-type CS-alpha/beta domain. 4 cysteine pairs are disulfide-bonded: Cys-31–Cys-82, Cys-35–Cys-57, Cys-43–Cys-63, and Cys-47–Cys-65. Arginine amide is present on Arg-84.

Expressed by the venom gland.

The protein localises to the secreted. Functionally, beta toxins bind voltage-independently at site-4 of sodium channels (Nav) and shift the voltage of activation toward more negative potentials thereby affecting sodium channel activation and promoting spontaneous and repetitive firing. In Tityus discrepans (Venezuelan scorpion), this protein is Toxin Td2.